The sequence spans 325 residues: tRNA N6-adenosine threonylcarbamoyltransferase (325 aa).

Residues H111 and H115 each contribute to the Fe cation site. Substrate is bound by residues 134-138 (LISGG), D167, G180, and N277. D305 serves as a coordination point for Fe cation.

Belongs to the KAE1 / TsaD family. It depends on Fe(2+) as a cofactor.

It is found in the cytoplasm. It localises to the secreted. It catalyses the reaction L-threonylcarbamoyladenylate + adenosine(37) in tRNA = N(6)-L-threonylcarbamoyladenosine(37) in tRNA + AMP + H(+). Its function is as follows. Required for the formation of a threonylcarbamoyl group on adenosine at position 37 (t(6)A37) in tRNAs that read codons beginning with adenine. Is involved in the transfer of the threonylcarbamoyl moiety of threonylcarbamoyl-AMP (TC-AMP) to the N6 group of A37, together with TsaE and TsaB. TsaD likely plays a direct catalytic role in this reaction. This Mannheimia haemolytica (Pasteurella haemolytica) protein is tRNA N6-adenosine threonylcarbamoyltransferase.